The primary structure comprises 480 residues: Probable G-protein coupled receptor Mth-like 6 (480 aa).

The first 20 residues, 1–20 (MLLNILAIILVFVISSQSEA), serve as a signal peptide directing secretion. Residues 21–202 (VIPGCDYFDT…LEHVYIPKSM (182 aa)) are Extracellular-facing. 4 disulfide bridges follow: cysteine 25/cysteine 78, cysteine 80/cysteine 85, cysteine 89/cysteine 179, and cysteine 90/cysteine 101. An N-linked (GlcNAc...) asparagine glycan is attached at asparagine 40. Residues asparagine 160 and asparagine 170 are each glycosylated (N-linked (GlcNAc...) asparagine). A helical membrane pass occupies residues 203 to 225 (PAVPQVGTISMVGCILTIAVYLY). Over 226-231 (IKKLRN) the chain is Cytoplasmic. The helical transmembrane segment at 232–254 (LLGKCFICYVFCKFVQYLIWAGG) threads the bilayer. Over 255-263 (DLNLWNNIC) the chain is Extracellular. Residues 264–283 (SLAGYTNYFFALASHFWLSV) traverse the membrane as a helical segment. Residues 284–303 (MSHQIWKNLRLINRDERSYH) are Cytoplasmic-facing. Residues 304 to 326 (FLIYNIYGWGTPAIMTAITYLVD) traverse the membrane as a helical segment. Residues 327–356 (WAWEDRPDKLNWIPGVGLYRCWINTYDWSA) are Extracellular-facing. The chain crosses the membrane as a helical span at residues 357–379 (MIYLYGPMLILSLFNVVTFILTV). Topologically, residues 380–405 (NHIMKIKSSVKSSTQQQRKCIQNNDF) are cytoplasmic. A helical membrane pass occupies residues 406 to 428 (LLYLRLSVMMGVTGISEVITYFV). The Extracellular portion of the chain corresponds to 429 to 437 (KRHKFWRQV). The chain crosses the membrane as a helical span at residues 438 to 457 (LRVPNFFHLGSGIVVFVLFI). Over 458 to 480 (LKRSTFQMIMERISGPRRQQPAS) the chain is Cytoplasmic.

This sequence belongs to the G-protein coupled receptor 2 family. Mth subfamily.

It is found in the cell membrane. The polypeptide is Probable G-protein coupled receptor Mth-like 6 (mthl6) (Drosophila melanogaster (Fruit fly)).